The primary structure comprises 134 residues: Methylglyoxal synthase (134 aa).

An MGS-like domain is found at 1-134 (MNIALIAHDN…DWRERVKERG (134 aa)). Substrate contacts are provided by residues histidine 8, lysine 12, 34–37 (TGTT), and 54–55 (SG). Aspartate 60 serves as the catalytic Proton donor/acceptor. Histidine 87 contacts substrate.

The protein belongs to the methylglyoxal synthase family.

The catalysed reaction is dihydroxyacetone phosphate = methylglyoxal + phosphate. Its function is as follows. Catalyzes the formation of methylglyoxal from dihydroxyacetone phosphate. This chain is Methylglyoxal synthase, found in Alkaliphilus metalliredigens (strain QYMF).